The sequence spans 110 residues: Large ribosomal subunit protein uL22 (110 aa).

The protein belongs to the universal ribosomal protein uL22 family. As to quaternary structure, part of the 50S ribosomal subunit.

Functionally, this protein binds specifically to 23S rRNA; its binding is stimulated by other ribosomal proteins, e.g. L4, L17, and L20. It is important during the early stages of 50S assembly. It makes multiple contacts with different domains of the 23S rRNA in the assembled 50S subunit and ribosome. The globular domain of the protein is located near the polypeptide exit tunnel on the outside of the subunit, while an extended beta-hairpin is found that lines the wall of the exit tunnel in the center of the 70S ribosome. In Mycoplasmopsis pulmonis (strain UAB CTIP) (Mycoplasma pulmonis), this protein is Large ribosomal subunit protein uL22.